We begin with the raw amino-acid sequence, 296 residues long: Probable alpha-L-glutamate ligase (296 aa).

The ATP-grasp domain maps to 104 to 287 (LQLLARQGID…IATLMITFIE (184 aa)). Residues lysine 141, 178–179 (EF), aspartate 187, and 211–213 (RSN) contribute to the ATP site. Positions 248, 260, and 262 each coordinate Mg(2+). Residues aspartate 248, glutamate 260, and asparagine 262 each coordinate Mn(2+).

This sequence belongs to the RimK family. Requires Mg(2+) as cofactor. The cofactor is Mn(2+).

This Sodalis glossinidius (strain morsitans) protein is Probable alpha-L-glutamate ligase.